The sequence spans 151 residues: Large ribosomal subunit protein uL15 (151 aa).

Residues G37 to Q57 are disordered.

This sequence belongs to the universal ribosomal protein uL15 family. As to quaternary structure, part of the 50S ribosomal subunit.

Its function is as follows. Binds to the 23S rRNA. This is Large ribosomal subunit protein uL15 from Prochlorococcus marinus (strain MIT 9313).